A 169-amino-acid polypeptide reads, in one-letter code: Probable phospholipid hydroperoxide glutathione peroxidase (169 aa).

Cys-43 is a catalytic residue.

Belongs to the glutathione peroxidase family. Germinating seed, apex, flower, as well as in stressed tissues.

It is found in the cytoplasm. The enzyme catalyses a hydroperoxy polyunsaturated fatty acid + 2 glutathione = a hydroxy polyunsaturated fatty acid + glutathione disulfide + H2O. In terms of biological role, protects cells and enzymes from oxidative damage, by catalyzing the reduction of hydrogen peroxide, lipid peroxides and organic hydroperoxide, by glutathione. The sequence is that of Probable phospholipid hydroperoxide glutathione peroxidase from Nicotiana sylvestris (Wood tobacco).